The sequence spans 346 residues: FMRFamide-related peptides type HF-1 (346 aa).

A signal peptide spans 1–19; it reads MTSLCLTIAPAVLSLICLS. A propeptide spanning residues 20–45 is cleaved from the precursor; that stretch reads SYGWAEDNNGIHTLDDGDNDPFFRHN. A Phenylalanine amide modification is found at Phe-51. Residues 54-94 constitute a propeptide that is removed on maturation; the sequence is AFVPLWDNADDSLVRKNLLTHWSEFPLSPALSSSDVFSRNS. Phe-100 is subject to Phenylalanine amide. The propeptide occupies 103 to 109; the sequence is SYPPYQD. Position 115 is a phenylalanine amide (Phe-115). Positions 118 to 203 are excised as a propeptide; the sequence is SHQPDIDEYL…EILSNEDDLE (86 aa). A disordered region spans residues 137-185; it reads YRKRRSEDGDSKEDGLNRVARSADANQQSKNTQSNKFGKDLQKRETKKE. The segment covering 141 to 152 has biased composition (basic and acidic residues); it reads RSEDGDSKEDGL. The span at 160–172 shows a compositional bias: polar residues; that stretch reads DANQQSKNTQSNK. Residues 173–185 show a composition bias toward basic and acidic residues; sequence FGKDLQKRETKKE. Phe-209 and Phe-216 each carry phenylalanine amide. Residues 219-226 constitute a propeptide that is removed on maturation; sequence GDEDESYD. A Phenylalanine amide modification is found at Phe-232. Residues 235 to 243 constitute a propeptide that is removed on maturation; sequence SLRHDQEFE. Phe-249 and Phe-256 each carry phenylalanine amide. The propeptide occupies 259–267; that stretch reads GDEDDAREE. Phenylalanine amide is present on Phe-273. Residues 276-283 constitute a propeptide that is removed on maturation; the sequence is SSNEDEDI. The residue at position 290 (Phe-290) is a Phenylalanine amide. Residues 293 to 301 constitute a propeptide that is removed on maturation; that stretch reads SGNEDGDVD. 2 positions are modified to phenylalanine amide: Phe-307 and Phe-314. The propeptide occupies 317 to 325; the sequence is SEKEDGDVD. Residues Phe-331 and Phe-338 each carry the phenylalanine amide modification. Positions 341–346 are excised as a propeptide; sequence GDSETS.

Belongs to the FARP (FMRFamide related peptide) family. In terms of tissue distribution, central nervous system.

The protein resides in the secreted. In terms of biological role, can function as both cardioregulatory hormones and transmitters and may regulate cardiovascular function. In Cornu aspersum (Brown garden snail), this protein is FMRFamide-related peptides type HF-1.